Here is a 142-residue protein sequence, read N- to C-terminus: Large ribosomal subunit protein uL13 (142 aa).

This sequence belongs to the universal ribosomal protein uL13 family. Part of the 50S ribosomal subunit.

In terms of biological role, this protein is one of the early assembly proteins of the 50S ribosomal subunit, although it is not seen to bind rRNA by itself. It is important during the early stages of 50S assembly. The polypeptide is Large ribosomal subunit protein uL13 (Pasteurella multocida (strain Pm70)).